The primary structure comprises 74 residues: uncharacterized protein (74 aa).

The dksA C4-type zinc-finger motif lies at 35–59; it reads CEECDAPIPAARRAAYPSATRCVSC.

This is an uncharacterized protein from Enterobacteriaceae (Bacteriophage P2).